The sequence spans 188 residues: Hypoxanthine/guanine phosphoribosyltransferase (188 aa).

The protein belongs to the purine/pyrimidine phosphoribosyltransferase family. Archaeal HPRT subfamily. Homodimer.

The protein resides in the cytoplasm. The catalysed reaction is IMP + diphosphate = hypoxanthine + 5-phospho-alpha-D-ribose 1-diphosphate. It carries out the reaction GMP + diphosphate = guanine + 5-phospho-alpha-D-ribose 1-diphosphate. It functions in the pathway purine metabolism; IMP biosynthesis via salvage pathway; IMP from hypoxanthine: step 1/1. In terms of biological role, catalyzes a salvage reaction resulting in the formation of IMP that is energically less costly than de novo synthesis. The chain is Hypoxanthine/guanine phosphoribosyltransferase from Methanobrevibacter ruminantium (strain ATCC 35063 / DSM 1093 / JCM 13430 / OCM 146 / M1) (Methanobacterium ruminantium).